Here is a 212-residue protein sequence, read N- to C-terminus: Thymidylate kinase (212 aa).

Position 11-18 (11-18 (GLEGAGKS)) interacts with ATP.

The protein belongs to the thymidylate kinase family.

It catalyses the reaction dTMP + ATP = dTDP + ADP. Phosphorylation of dTMP to form dTDP in both de novo and salvage pathways of dTTP synthesis. The sequence is that of Thymidylate kinase from Vibrio vulnificus (strain CMCP6).